Here is a 369-residue protein sequence, read N- to C-terminus: Septin-5 (369 aa).

The residue at position 13 (Thr13) is a Phosphothreonine. Residues 41 to 314 (KGFDFTLMVA…ENYRAHCIQQ (274 aa)) form the Septin-type G domain. The tract at residues 51-58 (GESGLGKS) is G1 motif. Residues 51–58 (GESGLGKS), Thr85, and Gly111 each bind GTP. The tract at residues 108–111 (DTPG) is G3 motif. Omega-N-methylarginine is present on Arg168. Residues 189 to 192 (AKAD) are G4 motif. 190–198 (KADCLVPSE) is a binding site for GTP. Ser225 carries the phosphoserine modification. Positions 248 and 263 each coordinate GTP. Position 327 is a phosphoserine (Ser327). Thr336 bears the Phosphothreonine mark. A coiled-coil region spans residues 338 to 369 (DAETEKLIRMKDEELRRMQEMLQKMKQQMQDQ).

The protein belongs to the TRAFAC class TrmE-Era-EngA-EngB-Septin-like GTPase superfamily. Septin GTPase family. Septins polymerize into heterooligomeric protein complexes that form filaments, and can associate with cellular membranes, actin filaments and microtubules. GTPase activity is required for filament formation. Interacts with SEPTIN2 and SEPTIN5. Interaction with SEPTIN4 not detected. In platelets, associated with a complex containing STX4. Interacts with PRKN; this interaction leads to SEPTIN5 ubiquitination and degradation. Interacts with DYRK1A. Interacts with STX1A; in the cerebellar cortex. Phosphorylated by DYRK1A.

The protein resides in the cytoplasm. Its subcellular location is the cytoskeleton. In terms of biological role, filament-forming cytoskeletal GTPase. Involved in cytokinesis (Potential). May play a role in platelet secretion. This Mus musculus (Mouse) protein is Septin-5.